We begin with the raw amino-acid sequence, 504 residues long: Cytochrome P450 monooxygenase braC (504 aa).

Residues 4–24 form a helical membrane-spanning segment; sequence LYLPTIWASTLTAATIFIVAV. Cys448 serves as a coordination point for heme.

The protein belongs to the cytochrome P450 family. The cofactor is heme.

The protein resides in the membrane. It functions in the pathway secondary metabolite biosynthesis. In terms of biological role, cytochrome P450 monooxygenase; part of the gene cluster that mediates the biosynthesis of the brasilane terpene glycosides brasilane D and E. The biosynthesis starts with the activity of the terpene cyclase braA that converts farnesyl pyrophosphate into the sesquiterpene alcohol trichobrasilenol. Subsequently, trichobrasilenol is glycosylated by the O-glycosyltransferase braB putatively using UDP-GlcNAc as sugar donor to yield brasilane A. The latter then undergoes two rounds of oxidation performed by the cytochrome P450 monooxygenase braC. In the first round braC hydroxylates C-12 forming brasilane D, which serves as substrate in the second round to establish the epoxide at the bond between C-5 and C-10 and oxidize the alcohol at C-12 to an aldehyde leading to the final product brasilane E. This is Cytochrome P450 monooxygenase braC from Annulohypoxylon truncatum (Hypoxylon truncatum).